Here is a 522-residue protein sequence, read N- to C-terminus: MEELQGYLEKDRSRQQPFXYPLLFQEYIYALAHDRGLKGSLFYEPTEVFGYDSKSSLALVKRLIIRIYQQNDFTSVVNDSNKNQFVNHHHNNFGYSHFYSQMISEGFAILVEIPFSLRLVSYFEKKEIPKSHNLRSIHSIFPFLEGKLXHLNYVSDILIPHPVHMEILIQILQCWIQDAPLLHFXRFFLHKXHNWBRFLXTPKESXYVFSKXNKRLFRFLYNSYVSECEFLLVFLRKKSSYLRLTSFGLFLERRHFYVKMEHLQMQHLILIVVCLDYXQGTLWSFXXXXXXXVRCQGXVVLASKGTHLLMKKWKYNFVNLWQYHFHFWYQSYRIHINQLSNYSLYFLGYLSSLLRNSSTVRNQMLENSFLIDTVTNKLETLVPVIFLIGSLSKAQFCTVSGHPISKPIWADLSDFEIIERFGRMCRNLSHYHSGSSKKQELHRIKYILRLSCARTLARKHKSTVRTFLRRLGSVLLEEFFTEEEQVLSLILPKAIPFTFYGSHKERIWHLDIIRINDLVNHS.

Belongs to the intron maturase 2 family. MatK subfamily.

The protein resides in the plastid. Its subcellular location is the chloroplast. In terms of biological role, usually encoded in the trnK tRNA gene intron. Probably assists in splicing its own and other chloroplast group II introns. This is Maturase K from Iris danfordiae (Danford iris).